Here is a 492-residue protein sequence, read N- to C-terminus: N-succinylglutamate 5-semialdehyde dehydrogenase (492 aa).

220 to 225 (GSANTG) contacts NAD(+). Active-site residues include Glu243 and Cys277.

The protein belongs to the aldehyde dehydrogenase family. AstD subfamily.

It carries out the reaction N-succinyl-L-glutamate 5-semialdehyde + NAD(+) + H2O = N-succinyl-L-glutamate + NADH + 2 H(+). It participates in amino-acid degradation; L-arginine degradation via AST pathway; L-glutamate and succinate from L-arginine: step 4/5. Functionally, catalyzes the NAD-dependent reduction of succinylglutamate semialdehyde into succinylglutamate. The sequence is that of N-succinylglutamate 5-semialdehyde dehydrogenase from Escherichia coli (strain UTI89 / UPEC).